A 119-amino-acid chain; its full sequence is Holo-[acyl-carrier-protein] synthase (119 aa).

Positions 8 and 58 each coordinate Mg(2+).

This sequence belongs to the P-Pant transferase superfamily. AcpS family. Mg(2+) is required as a cofactor.

Its subcellular location is the cytoplasm. The catalysed reaction is apo-[ACP] + CoA = holo-[ACP] + adenosine 3',5'-bisphosphate + H(+). Functionally, transfers the 4'-phosphopantetheine moiety from coenzyme A to a Ser of acyl-carrier-protein. The protein is Holo-[acyl-carrier-protein] synthase of Bacillus mycoides (strain KBAB4) (Bacillus weihenstephanensis).